A 125-amino-acid polypeptide reads, in one-letter code: Large ribosomal subunit protein bL17 (125 aa).

This sequence belongs to the bacterial ribosomal protein bL17 family. Part of the 50S ribosomal subunit. Contacts protein L32.

In Acinetobacter baylyi (strain ATCC 33305 / BD413 / ADP1), this protein is Large ribosomal subunit protein bL17.